Consider the following 667-residue polypeptide: mRNA cap guanine-N(7) methyltransferase (667 aa).

The span at 1 to 19 (MYDPARDSWEERDGDEARS) shows a compositional bias: basic and acidic residues. Residues 1–272 (MYDPARDSWE…RRRQEERERA (272 aa)) form a disordered region. Residues 33–52 (FSSSEQIYGASGENNNTTDL) are compositionally biased toward polar residues. Residues 72-87 (SPPAQSTTQTPPSIST) show a composition bias toward low complexity. Residues 88-128 (HVQSPVNPAAQEASNTQSLTSAAQNQSNKSTTTMDNTSGSA) show a composition bias toward polar residues. Positions 132–142 (PRADPSDKSNR) are enriched in basic and acidic residues. Polar residues predominate over residues 147 to 156 (ASPTDQNGSQ). Positions 256–272 (LVDRETLRRRQEERERA) are enriched in basic and acidic residues. Residues 309–667 (SKIKGLRSFN…FYHAFCFYKV (359 aa)) form the mRNA cap 0 methyltransferase domain. 318-319 (NN) serves as a coordination point for mRNA. S-adenosyl-L-methionine is bound by residues Lys322, Gly365, Asp389, Asp427, 470 to 472 (MFT), and Tyr475. Positions 521–535 (KKERQSQAKKEKTDE) are enriched in basic and acidic residues. Residues 521 to 547 (KKERQSQAKKEKTDEAPEDGEVEEDDG) are disordered. Acidic residues predominate over residues 536 to 547 (APEDGEVEEDDG).

The protein belongs to the class I-like SAM-binding methyltransferase superfamily. mRNA cap 0 methyltransferase family.

Its subcellular location is the nucleus. The enzyme catalyses a 5'-end (5'-triphosphoguanosine)-ribonucleoside in mRNA + S-adenosyl-L-methionine = a 5'-end (N(7)-methyl 5'-triphosphoguanosine)-ribonucleoside in mRNA + S-adenosyl-L-homocysteine. In terms of biological role, responsible for methylating the 5'-cap structure of mRNAs. The sequence is that of mRNA cap guanine-N(7) methyltransferase (abd1) from Neosartorya fischeri (strain ATCC 1020 / DSM 3700 / CBS 544.65 / FGSC A1164 / JCM 1740 / NRRL 181 / WB 181) (Aspergillus fischerianus).